A 469-amino-acid chain; its full sequence is Probable Xaa-Pro aminopeptidase PEPP (469 aa).

Aspartate 264, aspartate 275, glutamate 398, and glutamate 438 together coordinate Mn(2+).

The protein belongs to the peptidase M24B family. Requires Mn(2+) as cofactor.

It carries out the reaction Release of any N-terminal amino acid, including proline, that is linked to proline, even from a dipeptide or tripeptide.. In terms of biological role, catalyzes the removal of a penultimate prolyl residue from the N-termini of peptides. The polypeptide is Probable Xaa-Pro aminopeptidase PEPP (PEPP) (Ajellomyces capsulatus (strain G186AR / H82 / ATCC MYA-2454 / RMSCC 2432) (Darling's disease fungus)).